The sequence spans 324 residues: MIRGRLAPSPTGNIHLGNAWAFMLAWLAARQAGGKVLLRMEDIDPDRARPEYAEGIMADLRWLGLDWDEGPDIGGPCGPYVQSRRVQDYARVLDVLATLGAVYPCYCTRKELRTLAGAPHPGDLGAPYPGTCRNLTIEECSRKEKEGRRPAMRLRWPDGVFAFDDGLFGPQQAGGESCGGDFALRRSDGVFAYQLAVVVDDIAMGVTQVVRGADLLSCTPRQLALYSLLGAQPPAYLHVPLLLDATGERLAKRHQSLEIRALRNAGVPAANITGYLAMLAGMIPDFVPRAPKDCVGLLSTATLPTRPLVTPADILDRLKKGTSR.

L-glutamate-binding positions include 5-9 and glutamate 41; that span reads RLAPS. The 'HIGH' region motif lies at 8 to 18; the sequence is PSPTGNIHLGN. Positions 105, 107, 128, and 132 each coordinate Zn(2+). L-glutamate is bound by residues tyrosine 193 and arginine 211. The 'KMSKS' region motif lies at 249–253; it reads RLAKR. Position 252 (lysine 252) interacts with ATP.

It belongs to the class-I aminoacyl-tRNA synthetase family. GluQ subfamily. Requires Zn(2+) as cofactor.

Functionally, catalyzes the tRNA-independent activation of glutamate in presence of ATP and the subsequent transfer of glutamate onto a tRNA(Asp). Glutamate is transferred on the 2-amino-5-(4,5-dihydroxy-2-cyclopenten-1-yl) moiety of the queuosine in the wobble position of the QUC anticodon. In Nitratidesulfovibrio vulgaris (strain ATCC 29579 / DSM 644 / CCUG 34227 / NCIMB 8303 / VKM B-1760 / Hildenborough) (Desulfovibrio vulgaris), this protein is Glutamyl-Q tRNA(Asp) synthetase.